The primary structure comprises 160 residues: MLTKGITLILLLVLVHSSHGDSTPNRKFYIPSIRANWFKANEFCNSLKMRLVAIRSQEDNDAVARYVRTTSKFTDNCSFWIGASDLADEGTFVWVATGEEVTYTNWRENEPNNEGGNEDCIQLAYIPALNYHWSWNDNTCAGQSLYFICESVECDCVQPF.

An N-terminal signal peptide occupies residues 1-20 (MLTKGITLILLLVLVHSSHG). One can recognise a C-type lectin domain in the interval 23–140 (TPNRKFYIPS…YHWSWNDNTC (118 aa)). Disulfide bonds link Cys-44–Cys-140 and Cys-120–Cys-140. Residue Asn-76 is glycosylated (N-linked (GlcNAc...) asparagine).

Interacts with putative receptor-type tyrosine-protein phosphatase mosPTP-1; the interaction probably mediates the recruitment of West Nile virus particles in complex with C-type lectin mosGCTL-1 to the cell surface. In terms of assembly, (Microbial infection) Interacts with envelope protein E and virions of West Nile virus in a calcium-dependent manner. Female salivary gland (at protein level).

The protein localises to the secreted. Its function is as follows. Putative lectin. (Microbial infection) Facilitates West Nile virus infection in mosquitoes probably via capturing viral particles and presenting them to a ligand on the cell surface, thereby facilitating viral entry. The sequence is that of C-type lectin mosGCTL-1 from Aedes aegypti (Yellowfever mosquito).